The chain runs to 215 residues: UPF0173 metal-dependent hydrolase NEQ378 (215 aa).

This sequence belongs to the UPF0173 family.

In Nanoarchaeum equitans (strain Kin4-M), this protein is UPF0173 metal-dependent hydrolase NEQ378.